Reading from the N-terminus, the 134-residue chain is Small ribosomal subunit protein uS8 (134 aa).

Belongs to the universal ribosomal protein uS8 family. Part of the 30S ribosomal subunit. Contacts proteins S5 and S12.

In terms of biological role, one of the primary rRNA binding proteins, it binds directly to 16S rRNA central domain where it helps coordinate assembly of the platform of the 30S subunit. In Synechococcus sp. (strain JA-3-3Ab) (Cyanobacteria bacterium Yellowstone A-Prime), this protein is Small ribosomal subunit protein uS8.